The sequence spans 396 residues: GPN-loop GTPase 1 (396 aa).

A compositionally biased stretch (low complexity) spans Met-1–Lys-13. The tract at residues Met-1–Glu-30 is disordered. Gly-44–Thr-49 is a binding site for GTP. The Gly-Pro-Asn (GPN)-loop; involved in dimer interface signature appears at Gly-101–Asn-103. Asn-204–Asp-207 is a binding site for GTP. A coiled-coil region spans residues Tyr-284–Glu-387. The segment covering Asp-325–Tyr-342 has biased composition (basic and acidic residues). The segment at Asp-325–Ile-396 is disordered. A compositionally biased stretch (acidic residues) spans Asp-343–Leu-380.

This sequence belongs to the GPN-loop GTPase family. As to quaternary structure, heterodimer with gpn3. Binds to RNA polymerase II (RNAPII).

Its subcellular location is the cytoplasm. It is found in the nucleus. Its function is as follows. Small GTPase required for proper nuclear import of RNA polymerase II (RNAPII). May act at an RNAP assembly step prior to nuclear import. The sequence is that of GPN-loop GTPase 1 (gpn1) from Dictyostelium discoideum (Social amoeba).